The following is a 336-amino-acid chain: 3-hydroxyisobutyrate dehydrogenase, mitochondrial (336 aa).

The N-terminal 36 residues, 1-36, are a transit peptide targeting the mitochondrion; the sequence is MAASLRLLGAASGLRYWSRRLRPAAGSFAAVCSRSV. Residue 40–68 participates in NAD(+) binding; the sequence is TPVGFIGLGNMGNPMAKNLMKHGYPLIIY. N6-acetyllysine; alternate is present on residues lysine 60 and lysine 76. Lysine 60 and lysine 76 each carry N6-succinyllysine; alternate. Lysine 95 carries the N6-succinyllysine modification. NAD(+) is bound by residues 103–104 and asparagine 108; that span reads LP. Position 121 is an N6-acetyllysine (lysine 121). Threonine 134 contributes to the NAD(+) binding site. Residue lysine 141 is modified to N6-succinyllysine. Lysine 145 is modified (N6-acetyllysine). The residue at position 149 (lysine 149) is an N6-acetyllysine; alternate. Lysine 149 carries the N6-succinyllysine; alternate modification. Lysine 209 is a catalytic residue. N6-acetyllysine; alternate is present on residues lysine 238 and lysine 242. An N6-succinyllysine; alternate mark is found at lysine 238 and lysine 242. Lysine 284 serves as a coordination point for NAD(+). N6-succinyllysine is present on lysine 297. At lysine 321 the chain carries N6-acetyllysine; alternate. Position 321 is an N6-succinyllysine; alternate (lysine 321).

The protein belongs to the HIBADH-related family. 3-hydroxyisobutyrate dehydrogenase subfamily. As to quaternary structure, homodimer. Detected in skin fibroblasts.

The protein localises to the mitochondrion. The enzyme catalyses 3-hydroxy-2-methylpropanoate + NAD(+) = 2-methyl-3-oxopropanoate + NADH + H(+). The protein operates within amino-acid degradation; L-valine degradation. This Homo sapiens (Human) protein is 3-hydroxyisobutyrate dehydrogenase, mitochondrial (HIBADH).